Reading from the N-terminus, the 109-residue chain is Protein phosphatase 1 regulatory subunit 1C (109 aa).

Positions 25 to 109 are disordered; it reads AEQIRKRRPT…TNEREEQRDH (85 aa). Residues 45 to 54 show a composition bias toward basic and acidic residues; sequence NPPEIDDKRV. Polar residues predominate over residues 55–75; the sequence is PNTQGELQNASPKQRKQSVYT. Basic and acidic residues predominate over residues 100-109; sequence TNEREEQRDH.

It belongs to the protein phosphatase inhibitor 1 family.

It is found in the cytoplasm. Functionally, may increase cell susceptibility to TNF-induced apoptosis. This Pongo abelii (Sumatran orangutan) protein is Protein phosphatase 1 regulatory subunit 1C (PPP1R1C).